The chain runs to 86 residues: Cell division topological specificity factor (86 aa).

It belongs to the MinE family.

Functionally, prevents the cell division inhibition by proteins MinC and MinD at internal division sites while permitting inhibition at polar sites. This ensures cell division at the proper site by restricting the formation of a division septum at the midpoint of the long axis of the cell. The polypeptide is Cell division topological specificity factor (Allorhizobium ampelinum (strain ATCC BAA-846 / DSM 112012 / S4) (Agrobacterium vitis (strain S4))).